The following is a 335-amino-acid chain: Protease HtpX homolog (335 aa).

3 helical membrane-spanning segments follow: residues 9–29 (VYMM…STIA), 42–62 (LFTS…AIIY), and 64–84 (ILAY…LLII). Position 168 (H168) interacts with Zn(2+). E169 is a catalytic residue. H172 provides a ligand contact to Zn(2+). 2 consecutive transmembrane segments (helical) span residues 179 to 199 (AVML…YALL) and 213 to 233 (AAIG…VLAF). E238 provides a ligand contact to Zn(2+).

It belongs to the peptidase M48B family. Zn(2+) is required as a cofactor.

Its subcellular location is the cell membrane. This chain is Protease HtpX homolog, found in Archaeoglobus fulgidus (strain ATCC 49558 / DSM 4304 / JCM 9628 / NBRC 100126 / VC-16).